Here is a 412-residue protein sequence, read N- to C-terminus: Alanyl-tRNA editing protein Aarsd1 (412 aa).

The Zn(2+) site is built by His109 and His113. A Phosphoserine modification is found at Ser174. 2 residues coordinate Zn(2+): Cys209 and His213.

The protein belongs to the class-II aminoacyl-tRNA synthetase family. Alax-L subfamily. Zn(2+) serves as cofactor.

The protein localises to the cytoplasm. Functions in trans to edit the amino acid moiety from incorrectly charged tRNA(Ala). In Rattus norvegicus (Rat), this protein is Alanyl-tRNA editing protein Aarsd1 (Aarsd1).